Reading from the N-terminus, the 213-residue chain is Ribosomal RNA small subunit methyltransferase G (213 aa).

Residues G72, F77, 125–126 (IE), and R141 contribute to the S-adenosyl-L-methionine site.

This sequence belongs to the methyltransferase superfamily. RNA methyltransferase RsmG family.

The protein resides in the cytoplasm. The catalysed reaction is guanosine(527) in 16S rRNA + S-adenosyl-L-methionine = N(7)-methylguanosine(527) in 16S rRNA + S-adenosyl-L-homocysteine. Functionally, specifically methylates the N7 position of guanine in position 527 of 16S rRNA. The sequence is that of Ribosomal RNA small subunit methyltransferase G from Rhizobium meliloti (strain 1021) (Ensifer meliloti).